Here is a 379-residue protein sequence, read N- to C-terminus: MKENELKNEKSVDVLSFKQLESQKIVLPQDLFRSSFTWFCYEIYKSLAFRIWMLLWLPLSVWWKLSNNCIYPLIVSLLVLFLGPIFVLVICGLSRKRSLSKQLIQFCKEITENTPSSDPHDWEVVAANLNSYLYENNVWNTKYFFFNAMVCQEAFRTTLLEPFSLKKDKAAKVKSFKDSVPYIEEALGVYFTEVEKQWKLFNTEKSWSPVGLEDAKLPKEAYRFKLTWFLKRISNIFMLIPFLNFLCCIYVSRGMCLLLRTLYLGWILFMLVQGFQNIRVLIMSMEHKMQFLSTIINEQESGANGWDEIARKMNRYLFEKKAWKNEEFFFDGIDCEWFFNHFFYRVLSAKKSMWPLPLNVELWPYIKEAQLSRSEVLLV.

At 1–72 the chain is on the cytoplasmic side; sequence MKENELKNEK…WKLSNNCIYP (72 aa). A helical transmembrane segment spans residues 73-93; it reads LIVSLLVLFLGPIFVLVICGL. Residues 94 to 254 are Extracellular-facing; it reads SRKRSLSKQL…FLCCIYVSRG (161 aa). The chain crosses the membrane as a helical span at residues 255–275; that stretch reads MCLLLRTLYLGWILFMLVQGF. Residues 276–379 lie on the Cytoplasmic side of the membrane; that stretch reads QNIRVLIMSM…QLSRSEVLLV (104 aa).

It belongs to the DUP/COS family.

The protein localises to the membrane. This Saccharomyces cerevisiae (strain ATCC 204508 / S288c) (Baker's yeast) protein is Protein COS2 (COS2).